The following is a 600-amino-acid chain: MASTFTATSSIGSMVAPNGHKSDKKLISKLSSSSFGRRQSVCPRPRRSSSAIVCAAKELHFNKDGTTIRRLQAGVNKLADLVGVTLGPKGRNVVLESKYGSPRIVNDGVTVAREVELEDPVENIGAKLVRQAAAKTNDLAGDGTTTSVVLAQGFIAEGVKVVAAGANPVLITRGIEKTAKALVTELKKMSKEVEDSELADVAAVSAGNNDEIGNMIAEAMSKVGRKGVVTLEEGKSAENNLYVVEGMQFDRGYISPYFVTDSEKMSVEFDNCKLLLVDKKITNARDLVGVLEDAIRGGYPILIIAEDIEQEALATLVVNKLRGTLKIAALRAPGFGERKSQYLDDIAILTGATVIREEVGLSLDKAGKEVLGNASKVVLTKETSTIVGDGSTQDAVKKRVTQIKNLIEQAEQDYEKEKLNERIAKLSGGVAVIQVGAQTETELKEKKLRVEDALNATKAAVEEGIVVGGGCTLLRLASKVDAIKATLDNDEEKVGADIVKRALSYPLKLIAKNAGVNGSVVSEKVLSNDNVKFGYNAATGKYEDLMAAGIIDPTKVVRCCLEHAASVAKTFLMSDCVVVEIKEPEPVPVGNPMDNSGYGY.

A compositionally biased stretch (polar residues) spans 1 to 12 (MASTFTATSSIG). The segment at 1-23 (MASTFTATSSIGSMVAPNGHKSD) is disordered. Residues 1-54 (MASTFTATSSIGSMVAPNGHKSDKKLISKLSSSSFGRRQSVCPRPRRSSSAIVC) constitute a chloroplast transit peptide. Residues serine 101 and serine 478 each carry the phosphoserine modification.

This sequence belongs to the chaperonin (HSP60) family. Part of the Cpn60 complex composed of 7 alpha and 7 beta subunits. Can also form a complex composed of 14 beta subunits only. Both complexes show ATPase activity. The Cpn60 complex interacts with the Cpn10 complex. Interacts with RAB during heat stress. Expressed in leaves, stems, petioles and flowers.

The protein resides in the plastid. It localises to the chloroplast stroma. Functionally, binds RuBisCO small and large subunits and is implicated in the assembly of the enzyme oligomer. Involved in protein assisted folding. Required for proper plastid division. The protein is Chaperonin 60 subunit beta 1, chloroplastic (CPN60B1) of Arabidopsis thaliana (Mouse-ear cress).